Reading from the N-terminus, the 373-residue chain is RNA 3'-terminal phosphate cyclase-like protein (373 aa).

The protein belongs to the RNA 3'-terminal cyclase family. Type 2 subfamily. In terms of assembly, part of the small subunit (SSU) processome, composed of more than 70 proteins and the RNA chaperone small nucleolar RNA (snoRNA) U3. Interacts with BMS1.

Its subcellular location is the nucleus. It localises to the nucleolus. As part of the small subunit (SSU) processome, it plays a role in 40S-ribosomal-subunit biogenesis in the early pre-rRNA processing steps at sites A0, A1 and A2 that are required for proper maturation of the 18S RNA. Activates BMS1 by promoting GDP/GTP exchange. Does not have cyclase activity. The polypeptide is RNA 3'-terminal phosphate cyclase-like protein (RCL1) (Bos taurus (Bovine)).